The chain runs to 327 residues: Tagatose 1,6-diphosphate aldolase 2 (327 aa).

This sequence belongs to the aldolase LacD family.

The catalysed reaction is D-tagatofuranose 1,6-bisphosphate = D-glyceraldehyde 3-phosphate + dihydroxyacetone phosphate. The protein operates within carbohydrate metabolism; D-tagatose 6-phosphate degradation; D-glyceraldehyde 3-phosphate and glycerone phosphate from D-tagatose 6-phosphate: step 2/2. This chain is Tagatose 1,6-diphosphate aldolase 2, found in Streptococcus pyogenes serotype M6 (strain ATCC BAA-946 / MGAS10394).